The chain runs to 292 residues: MASITELIKQLRASTQAGFMDCKKALEATNNDIDQAIKWLRENGIAKAAKKVDNVASEGVIKLKLADQKATILEINSQTDFVTKNDQFVAFSNELVDLVHKHETTDVAKIEQLKLASGSTVAETQIHLTAIIGEKISLRRVAFVKEEANSSLATYLHSNSRIGVIVKTSKTDDKEFLKHLAMHIAASNPKFVSQKDVSADFIAKEREIAAAQAQSENKPKEFIDRIVDGRINKVLEEVCLVNQKFLVNQEQTVQQAAQAKKVEILSFIRYEVGEGIEKQVSNFADEVKAQMK.

The interval T79 to V82 is involved in Mg(2+) ion dislocation from EF-Tu.

This sequence belongs to the EF-Ts family.

The protein resides in the cytoplasm. Functionally, associates with the EF-Tu.GDP complex and induces the exchange of GDP to GTP. It remains bound to the aminoacyl-tRNA.EF-Tu.GTP complex up to the GTP hydrolysis stage on the ribosome. The sequence is that of Elongation factor Ts from Mycoplasmoides gallisepticum (strain R(low / passage 15 / clone 2)) (Mycoplasma gallisepticum).